The following is a 223-amino-acid chain: Cytotoxic T-lymphocyte protein 4 (223 aa).

The first 35 residues, 1 to 35 (MACLGFQRHKAQLNLATRTWPCTLLFFLLFIPVFC), serve as a signal peptide directing secretion. Residues 36–161 (KAMHVAQPAV…IDPEPCPDSD (126 aa)) are Extracellular-facing. The Ig-like V-type domain maps to 39-140 (HVAQPAVVLA…VELMYPPPYY (102 aa)). Positions 46-50 (VLASS) are homodimerization. Cystine bridges form between cysteine 58–cysteine 129 and cysteine 85–cysteine 103. N-linked (GlcNAc...) asparagine glycosylation is present at asparagine 113. The segment at 134–139 (MYPPPY) is important for interaction with CD80 and CD86. N-linked (GlcNAc...) asparagine glycosylation is present at asparagine 145. The interval 150-155 (YVIDPE) is homodimerization. The chain crosses the membrane as a helical span at residues 162 to 182 (FLLWILAAVSSGLFFYSFLLT). The Cytoplasmic portion of the chain corresponds to 183–223 (AVSLSKMLKKRSPLTTGVYVKMPPTEPECEKQFQPYFIPIN). Tyrosine 201 carries the post-translational modification Phosphotyrosine; by TXK and JAK2.

As to quaternary structure, homodimer; disulfide-linked. Binds to CD80/B7-1 and CD86/B7.2. Interacts with ICOSLG. N-glycosylation is important for dimerization. In terms of processing, phosphorylation at Tyr-201 prevents binding to the AP-2 adapter complex, blocks endocytosis, and leads to retention of CTLA4 on the cell surface. Widely expressed with highest levels in lymphoid tissues. Detected in activated T-cells where expression levels are 30- to 50-fold less than CD28, the stimulatory coreceptor, on the cell surface following activation.

The protein resides in the cell membrane. Its function is as follows. Inhibitory receptor acting as a major negative regulator of T-cell responses. The affinity of CTLA4 for its natural B7 family ligands, CD80 and CD86, is considerably stronger than the affinity of their cognate stimulatory coreceptor CD28. This Homo sapiens (Human) protein is Cytotoxic T-lymphocyte protein 4 (CTLA4).